The sequence spans 251 residues: Triosephosphate isomerase (251 aa).

Substrate is bound by residues N10 and K12. The active-site Electrophile is the H95. The active-site Proton acceptor is E167.

It belongs to the triosephosphate isomerase family. In terms of assembly, homodimer.

It carries out the reaction D-glyceraldehyde 3-phosphate = dihydroxyacetone phosphate. It functions in the pathway carbohydrate biosynthesis; gluconeogenesis. It participates in carbohydrate degradation; glycolysis; D-glyceraldehyde 3-phosphate from glycerone phosphate: step 1/1. The sequence is that of Triosephosphate isomerase (TPI) from Coprinopsis cinerea (strain Okayama-7 / 130 / ATCC MYA-4618 / FGSC 9003) (Inky cap fungus).